We begin with the raw amino-acid sequence, 481 residues long: Dual specificity protein kinase CLK4 (481 aa).

Disordered stretches follow at residues 1 to 46 (MRHS…CKPH) and 102 to 143 (SKSS…EDDE). Over residues 8–24 (HCPDWDSRESWGHESYR) the composition is skewed to basic and acidic residues. Basic residues-rich tracts occupy residues 25–34 (GSHKRKRRSH) and 106–136 (VRSR…RKRS). 2 positions are modified to phosphoserine: S136 and S138. Residues 159–475 (YEIVDTLGEG…LDEALQHPFF (317 aa)) form the Protein kinase domain. ATP contacts are provided by residues 165–173 (LGEGAFGKV) and K189. D286 serves as the catalytic Proton acceptor.

Belongs to the protein kinase superfamily. CMGC Ser/Thr protein kinase family. Lammer subfamily. Interacts with UBL5. Autophosphorylates on all three types of residues. Expressed in liver, kidney, heart, muscle, brain and endothelial cells.

The protein localises to the nucleus. The catalysed reaction is L-seryl-[protein] + ATP = O-phospho-L-seryl-[protein] + ADP + H(+). It catalyses the reaction L-threonyl-[protein] + ATP = O-phospho-L-threonyl-[protein] + ADP + H(+). It carries out the reaction L-tyrosyl-[protein] + ATP = O-phospho-L-tyrosyl-[protein] + ADP + H(+). With respect to regulation, TG003 inhibits its kinase activity and affects the regulation of alternative splicing mediated by phosphorylation of SR proteins. Dual specificity kinase acting on both serine/threonine and tyrosine-containing substrates. Phosphorylates serine- and arginine-rich (SR) proteins of the spliceosomal complex and may be a constituent of a network of regulatory mechanisms that enable SR proteins to control RNA splicing. Phosphorylates SRSF1 and SRSF3. Required for the regulation of alternative splicing of MAPT/TAU. Regulates the alternative splicing of tissue factor (F3) pre-mRNA in endothelial cells. The sequence is that of Dual specificity protein kinase CLK4 (CLK4) from Homo sapiens (Human).